The following is a 79-amino-acid chain: Acyl carrier protein (79 aa).

The region spanning 2–77 is the Carrier domain; that stretch reads SDIEARVRKI…HAIDYIKSNA (76 aa). Ser-37 is modified (O-(pantetheine 4'-phosphoryl)serine).

Belongs to the acyl carrier protein (ACP) family. Post-translationally, 4'-phosphopantetheine is transferred from CoA to a specific serine of apo-ACP by AcpS. This modification is essential for activity because fatty acids are bound in thioester linkage to the sulfhydryl of the prosthetic group.

Its subcellular location is the cytoplasm. Its pathway is lipid metabolism; fatty acid biosynthesis. Functionally, carrier of the growing fatty acid chain in fatty acid biosynthesis. The polypeptide is Acyl carrier protein (Xylella fastidiosa (strain M23)).